The primary structure comprises 216 residues: 4-hydroxy-tetrahydrodipicolinate reductase (216 aa).

NAD(+) contacts are provided by residues Ser9–Met12, Gly71–Thr73, and Ala95–Phe98. His127 serves as the catalytic Proton donor/acceptor. His128 contributes to the (S)-2,3,4,5-tetrahydrodipicolinate binding site. Lys131 is an NAD(+) binding site. Lys131 functions as the Proton donor in the catalytic mechanism. Residue Gly137–Thr138 coordinates (S)-2,3,4,5-tetrahydrodipicolinate.

Belongs to the DapB family. As to quaternary structure, homotetramer.

The protein localises to the cytoplasm. The enzyme catalyses (S)-2,3,4,5-tetrahydrodipicolinate + NAD(+) + H2O = (2S,4S)-4-hydroxy-2,3,4,5-tetrahydrodipicolinate + NADH + H(+). The catalysed reaction is (S)-2,3,4,5-tetrahydrodipicolinate + NADP(+) + H2O = (2S,4S)-4-hydroxy-2,3,4,5-tetrahydrodipicolinate + NADPH + H(+). Its pathway is amino-acid biosynthesis; L-lysine biosynthesis via DAP pathway; (S)-tetrahydrodipicolinate from L-aspartate: step 4/4. Is inhibited by high concentrations of NADH. In terms of biological role, catalyzes the conversion of 4-hydroxy-tetrahydrodipicolinate (HTPA) to tetrahydrodipicolinate. Uses NADPH as a reductant with much more efficiency than NADH. The chain is 4-hydroxy-tetrahydrodipicolinate reductase from Thermotoga maritima (strain ATCC 43589 / DSM 3109 / JCM 10099 / NBRC 100826 / MSB8).